The primary structure comprises 335 residues: Holliday junction branch migration complex subunit RuvB (335 aa).

The interval 1–183 (MDERIISSET…FGVIDHLEFY (183 aa)) is large ATPase domain (RuvB-L). ATP-binding positions include L22, R23, G64, K67, T68, T69, 130–132 (EDY), R173, Y183, and R220. Residue T68 participates in Mg(2+) binding. Positions 184 to 254 (TEEQLTEIVL…LAKEALTLLQ (71 aa)) are small ATPAse domain (RuvB-S). The head domain (RuvB-H) stretch occupies residues 257 to 335 (PRGLDTIDQK…HLGISYEKEV (79 aa)). Positions 293, 312, and 317 each coordinate DNA.

Belongs to the RuvB family. As to quaternary structure, homohexamer. Forms an RuvA(8)-RuvB(12)-Holliday junction (HJ) complex. HJ DNA is sandwiched between 2 RuvA tetramers; dsDNA enters through RuvA and exits via RuvB. An RuvB hexamer assembles on each DNA strand where it exits the tetramer. Each RuvB hexamer is contacted by two RuvA subunits (via domain III) on 2 adjacent RuvB subunits; this complex drives branch migration. In the full resolvosome a probable DNA-RuvA(4)-RuvB(12)-RuvC(2) complex forms which resolves the HJ.

Its subcellular location is the cytoplasm. It carries out the reaction ATP + H2O = ADP + phosphate + H(+). Functionally, the RuvA-RuvB-RuvC complex processes Holliday junction (HJ) DNA during genetic recombination and DNA repair, while the RuvA-RuvB complex plays an important role in the rescue of blocked DNA replication forks via replication fork reversal (RFR). RuvA specifically binds to HJ cruciform DNA, conferring on it an open structure. The RuvB hexamer acts as an ATP-dependent pump, pulling dsDNA into and through the RuvAB complex. RuvB forms 2 homohexamers on either side of HJ DNA bound by 1 or 2 RuvA tetramers; 4 subunits per hexamer contact DNA at a time. Coordinated motions by a converter formed by DNA-disengaged RuvB subunits stimulates ATP hydrolysis and nucleotide exchange. Immobilization of the converter enables RuvB to convert the ATP-contained energy into a lever motion, pulling 2 nucleotides of DNA out of the RuvA tetramer per ATP hydrolyzed, thus driving DNA branch migration. The RuvB motors rotate together with the DNA substrate, which together with the progressing nucleotide cycle form the mechanistic basis for DNA recombination by continuous HJ branch migration. Branch migration allows RuvC to scan DNA until it finds its consensus sequence, where it cleaves and resolves cruciform DNA. This chain is Holliday junction branch migration complex subunit RuvB, found in Listeria monocytogenes serotype 4a (strain HCC23).